We begin with the raw amino-acid sequence, 790 residues long: Kinesin-like protein KIF9 (790 aa).

One can recognise a Kinesin motor domain in the interval 6-340 (KVQAFVRVRP…LRFASRMKLV (335 aa)). ATP-binding positions include 12–14 (RVR) and 93–100 (GQTGAGKT). The stretch at 342 to 442 (TEPAINEKYD…EQEVESALRR (101 aa)) forms a coiled coil. Residues 482–521 (GVAPFSVKPGKKPKTKKTPKDQFSSSARKEGASSPVSGKD) are disordered. T530 is modified (phosphothreonine). Residues 547–577 (RERETSSIEPLISDSPKEELRAPRPSTPPSR) form a disordered region. Residues 600–695 (KSILNERKKR…YCQRLVDQCR (96 aa)) are a coiled coil.

The protein belongs to the TRAFAC class myosin-kinesin ATPase superfamily. Kinesin family. In terms of assembly, interacts with HYDIN. Highly expressed in the testis (at protein level). Weakly expressed in the brain, thymus, lung and heart.

The protein resides in the cytoplasm. The protein localises to the cytoskeleton. It is found in the cell projection. It localises to the cilium. Its subcellular location is the flagellum. The protein resides in the flagellum axoneme. Essential for normal male fertility and for progressive motility of spermatozoa. The chain is Kinesin-like protein KIF9 (Kif9) from Mus musculus (Mouse).